Consider the following 96-residue polypeptide: Putative septation protein SpoVG (96 aa).

The protein belongs to the SpoVG family.

Functionally, could be involved in septation. The polypeptide is Putative septation protein SpoVG (Phytoplasma australiense).